The following is a 455-amino-acid chain: Tryptophan dimethylallyltransferase (455 aa).

Residues 79–80 and Glu88 contribute to the L-tryptophan site; that span reads VL. Residues Arg99, Lys186, and Tyr188 each coordinate substrate. The L-tryptophan site is built by Tyr190 and Arg256. Positions 269, 271, 273, 355, 357, 421, and 425 each coordinate substrate.

Belongs to the tryptophan dimethylallyltransferase family. As to quaternary structure, homodimer.

It carries out the reaction L-tryptophan + dimethylallyl diphosphate = 4-(3-methylbut-2-enyl)-L-tryptophan + diphosphate. It participates in alkaloid biosynthesis; ergot alkaloid biosynthesis. Tryptophan dimethylallyltransferase; part of the gene cluster that mediates the biosynthesis of fungal ergot alkaloid. DmaW catalyzes the first step of ergot alkaloid biosynthesis by condensing dimethylallyl diphosphate (DMAP) and tryptophan to form 4-dimethylallyl-L-tryptophan. The second step is catalyzed by the methyltransferase easF that methylates 4-dimethylallyl-L-tryptophan in the presence of S-adenosyl-L-methionine, resulting in the formation of 4-dimethylallyl-L-abrine. The catalase easC and the FAD-dependent oxidoreductase easE then transform 4-dimethylallyl-L-abrine to chanoclavine-I which is further oxidized by easD in the presence of NAD(+), resulting in the formation of chanoclavine-I aldehyde. Agroclavine dehydrogenase easG then mediates the conversion of chanoclavine-I aldehyde to agroclavine via a non-enzymatic adduct reaction: the substrate is an iminium intermediate that is formed spontaneously from chanoclavine-I aldehyde in the presence of glutathione. Further conversion of agroclavine to paspalic acid is a two-step process involving oxidation of agroclavine to elymoclavine and of elymoclavine to paspalic acid, the second step being performed by the elymoclavine oxidase cloA. However, cloA does not encode a functional enzyme indicating that C.fusiformis terminates its ergot alkaloid pathway at elymoclavine. This Claviceps fusiformis (Ergot fungus) protein is Tryptophan dimethylallyltransferase.